Here is a 347-residue protein sequence, read N- to C-terminus: MEVKKDNLSSQAKLWNFIYGFAESLVLKCAVQLDLANIIHNSGTSMTLSELSSRLPSQPVNEDALYRVMRYLVHMKLFTKASIDGELRYGLAPPAKYLVKGWDKCMVGSILAITDKDFMAPWHYLKDGLSGESGTAFEKALGTNIWGYMAEHPEKNQLFNEAMANDSRLIMSALVKECGNIFNGITTLVDVGGGTGTAVRNIANAFPHIKCTVYDLPHVIADSPGYSEVHCVAGDMFKFIPKADAIMMKCILHDWDDKECIEILKRCKEAVPVKGGKVIIVDIVLNVQSEHPYTKMRLTLDLDMMLNTGGKERTEEEWKKLIHDAGYKGHKITQITAVQSVIEAYPY.

Glycine 192, aspartate 215, aspartate 235, methionine 236, and lysine 249 together coordinate S-adenosyl-L-methionine. The active-site Proton acceptor is histidine 253.

The protein belongs to the class I-like SAM-binding methyltransferase superfamily. Cation-independent O-methyltransferase family. COMT subfamily. In terms of assembly, homodimer.

It catalyses the reaction norcoclaurine + S-adenosyl-L-methionine = coclaurine + S-adenosyl-L-homocysteine + H(+). It functions in the pathway alkaloid biosynthesis; (S)-reticuline biosynthesis; (S)-reticuline from (S)-norcoclaurine: step 1/4. In terms of biological role, catalyzes the transfer of the S-methyl group of S-adenosyl-L-methionine (AdoMet) to the 6-hydroxyl group of norcoclaurine to form coclaurine. This is (RS)-norcoclaurine 6-O-methyltransferase from Coptis japonica (Japanese goldthread).